We begin with the raw amino-acid sequence, 484 residues long: Glutamyl-tRNA(Gln) amidotransferase subunit A (484 aa).

Active-site charge relay system residues include lysine 77 and serine 152. Serine 176 (acyl-ester intermediate) is an active-site residue.

It belongs to the amidase family. GatA subfamily. Heterotrimer of A, B and C subunits.

It carries out the reaction L-glutamyl-tRNA(Gln) + L-glutamine + ATP + H2O = L-glutaminyl-tRNA(Gln) + L-glutamate + ADP + phosphate + H(+). Functionally, allows the formation of correctly charged Gln-tRNA(Gln) through the transamidation of misacylated Glu-tRNA(Gln) in organisms which lack glutaminyl-tRNA synthetase. The reaction takes place in the presence of glutamine and ATP through an activated gamma-phospho-Glu-tRNA(Gln). This is Glutamyl-tRNA(Gln) amidotransferase subunit A from Lacticaseibacillus paracasei (strain ATCC 334 / BCRC 17002 / CCUG 31169 / CIP 107868 / KCTC 3260 / NRRL B-441) (Lactobacillus paracasei).